A 233-amino-acid polypeptide reads, in one-letter code: Leucyl/phenylalanyl-tRNA--protein transferase (233 aa).

The protein belongs to the L/F-transferase family.

The protein resides in the cytoplasm. It carries out the reaction N-terminal L-lysyl-[protein] + L-leucyl-tRNA(Leu) = N-terminal L-leucyl-L-lysyl-[protein] + tRNA(Leu) + H(+). The catalysed reaction is N-terminal L-arginyl-[protein] + L-leucyl-tRNA(Leu) = N-terminal L-leucyl-L-arginyl-[protein] + tRNA(Leu) + H(+). It catalyses the reaction L-phenylalanyl-tRNA(Phe) + an N-terminal L-alpha-aminoacyl-[protein] = an N-terminal L-phenylalanyl-L-alpha-aminoacyl-[protein] + tRNA(Phe). Functions in the N-end rule pathway of protein degradation where it conjugates Leu, Phe and, less efficiently, Met from aminoacyl-tRNAs to the N-termini of proteins containing an N-terminal arginine or lysine. The protein is Leucyl/phenylalanyl-tRNA--protein transferase of Shewanella denitrificans (strain OS217 / ATCC BAA-1090 / DSM 15013).